The following is a 631-amino-acid chain: Peptide-N(4)-(N-acetyl-beta-glucosaminyl)asparagine amidase (631 aa).

The 64-residue stretch at 34 to 97 (EAVRILLVLL…PSSNAYTLPT (64 aa)) folds into the PUB domain. At serine 126 the chain carries Phosphoserine. Cysteine 246, cysteine 249, cysteine 272, and cysteine 273 together coordinate Zn(2+). Catalysis depends on cysteine 296, which acts as the Nucleophile. Residues histidine 323 and aspartate 340 contribute to the active site. A PAW domain is found at 441-631 (ELKGRSSGSL…YPFDLQVQLH (191 aa)).

It belongs to the transglutaminase-like superfamily. PNGase family. Requires Zn(2+) as cofactor.

It is found in the cytoplasm. It carries out the reaction Hydrolysis of an N(4)-(acetyl-beta-D-glucosaminyl)asparagine residue in which the glucosamine residue may be further glycosylated, to yield a (substituted) N-acetyl-beta-D-glucosaminylamine and a peptide containing an aspartate residue.. In terms of biological role, specifically deglycosylates the denatured form of N-linked glycoproteins in the cytoplasm and assists their proteasome-mediated degradation. Cleaves the beta-aspartyl-glucosamine (GlcNAc) of the glycan and the amide side chain of Asn, converting Asn to Asp. Prefers proteins containing high-mannose over those bearing complex type oligosaccharides. Can recognize misfolded proteins in the endoplasmic reticulum that are exported to the cytosol to be destroyed and deglycosylate them, while it has no activity toward native proteins. Deglycosylation is a prerequisite for subsequent proteasome-mediated degradation of some, but not all, misfolded glycoproteins. This is Peptide-N(4)-(N-acetyl-beta-glucosaminyl)asparagine amidase (Pngl) from Drosophila melanogaster (Fruit fly).